The chain runs to 507 residues: Probable cytosol aminopeptidase (507 aa).

Lys-254 and Asp-259 together coordinate Mn(2+). The active site involves Lys-266. 3 residues coordinate Mn(2+): Asp-277, Asp-336, and Glu-338. The active site involves Arg-340. Residues 486-507 (PRKAQPKARSAKRSKPVSRTRA) are disordered. Residues 489–507 (AQPKARSAKRSKPVSRTRA) are compositionally biased toward basic residues.

It belongs to the peptidase M17 family. Requires Mn(2+) as cofactor.

It is found in the cytoplasm. It carries out the reaction Release of an N-terminal amino acid, Xaa-|-Yaa-, in which Xaa is preferably Leu, but may be other amino acids including Pro although not Arg or Lys, and Yaa may be Pro. Amino acid amides and methyl esters are also readily hydrolyzed, but rates on arylamides are exceedingly low.. The enzyme catalyses Release of an N-terminal amino acid, preferentially leucine, but not glutamic or aspartic acids.. Functionally, presumably involved in the processing and regular turnover of intracellular proteins. Catalyzes the removal of unsubstituted N-terminal amino acids from various peptides. This is Probable cytosol aminopeptidase from Polaromonas sp. (strain JS666 / ATCC BAA-500).